A 356-amino-acid chain; its full sequence is Fructose-1,6-bisphosphatase class 1 (356 aa).

Residues 1–26 (MAREWPMTHPSNHPMDHHHQTLQAHL) are disordered. Positions 101, 120, 122, and 123 each coordinate Mg(2+). Residues 123–126 (DGSS) and Asn211 contribute to the substrate site. Glu283 lines the Mg(2+) pocket.

The protein belongs to the FBPase class 1 family. As to quaternary structure, homotetramer. Mg(2+) serves as cofactor.

The protein resides in the cytoplasm. The catalysed reaction is beta-D-fructose 1,6-bisphosphate + H2O = beta-D-fructose 6-phosphate + phosphate. It participates in carbohydrate biosynthesis; Calvin cycle. The protein is Fructose-1,6-bisphosphatase class 1 of Bradyrhizobium sp. (strain ORS 278).